Consider the following 503-residue polypeptide: Cysteine desulfurase, mitochondrial (503 aa).

The N-terminal 27 residues, 1 to 27, are a transit peptide targeting the mitochondrion; the sequence is MSNIAPQVLRHASRACSRRLSLSASLV. A compositionally biased stretch (low complexity) spans 34-50; it reads RTVTGSGSGGRRYVSGS. Positions 34–58 are disordered; that stretch reads RTVTGSGSGGRRYVSGSQRHNAQAQ. Pyridoxal 5'-phosphate contacts are provided by residues 172–173, Asn-254, Gln-282, and 302–304; these read AT and SGH. Lys-305 is subject to N6-(pyridoxal phosphate)lysine. Thr-342 contacts pyridoxal 5'-phosphate. The active-site Cysteine persulfide intermediate is the Cys-427. Residue Cys-427 coordinates [2Fe-2S] cluster.

This sequence belongs to the class-V pyridoxal-phosphate-dependent aminotransferase family. NifS/IscS subfamily. It depends on pyridoxal 5'-phosphate as a cofactor.

The protein localises to the mitochondrion. It catalyses the reaction (sulfur carrier)-H + L-cysteine = (sulfur carrier)-SH + L-alanine. Its function is as follows. Catalyzes the removal of elemental sulfur from cysteine to produce alanine. It supplies the inorganic sulfur for iron-sulfur (Fe-S) clusters. Plays a role in both tRNA-processing and mitochondrial metabolism. Involved in the 2-thio-modification of both 5-carboxymethylaminomethyl-2-thiouridine in mitochondrial tRNAs and 5-methoxycarbonylmethyl-2-thiouridine (mcm5s2U) in cytoplasmic tRNAs. The polypeptide is Cysteine desulfurase, mitochondrial (Arthroderma benhamiae (strain ATCC MYA-4681 / CBS 112371) (Trichophyton mentagrophytes)).